A 222-amino-acid chain; its full sequence is Probable nicotinate-nucleotide adenylyltransferase (222 aa).

The protein belongs to the NadD family.

The catalysed reaction is nicotinate beta-D-ribonucleotide + ATP + H(+) = deamido-NAD(+) + diphosphate. It functions in the pathway cofactor biosynthesis; NAD(+) biosynthesis; deamido-NAD(+) from nicotinate D-ribonucleotide: step 1/1. Functionally, catalyzes the reversible adenylation of nicotinate mononucleotide (NaMN) to nicotinic acid adenine dinucleotide (NaAD). The polypeptide is Probable nicotinate-nucleotide adenylyltransferase (Pseudomonas syringae pv. tomato (strain ATCC BAA-871 / DC3000)).